The sequence spans 98 residues: Small ribosomal subunit protein uS19 (98 aa).

The disordered stretch occupies residues 77–98; it reads TRTYRGHAGGKAEKGGSAPKRK.

This sequence belongs to the universal ribosomal protein uS19 family.

Protein S19 forms a complex with S13 that binds strongly to the 16S ribosomal RNA. This is Small ribosomal subunit protein uS19 from Prosthecochloris aestuarii (strain DSM 271 / SK 413).